Reading from the N-terminus, the 116-residue chain is Large ribosomal subunit protein bL20 (116 aa).

This sequence belongs to the bacterial ribosomal protein bL20 family.

In terms of biological role, binds directly to 23S ribosomal RNA and is necessary for the in vitro assembly process of the 50S ribosomal subunit. It is not involved in the protein synthesizing functions of that subunit. This Hydrogenobaculum sp. (strain Y04AAS1) protein is Large ribosomal subunit protein bL20.